Consider the following 23-residue polypeptide: Unknown protein NF016 from 2D-PAGE (23 aa).

In Naegleria fowleri (Brain eating amoeba), this protein is Unknown protein NF016 from 2D-PAGE.